The following is a 96-amino-acid chain: Phosphoribosyl-ATP pyrophosphatase (96 aa).

The protein belongs to the PRA-PH family.

It localises to the cytoplasm. It catalyses the reaction 1-(5-phospho-beta-D-ribosyl)-ATP + H2O = 1-(5-phospho-beta-D-ribosyl)-5'-AMP + diphosphate + H(+). It functions in the pathway amino-acid biosynthesis; L-histidine biosynthesis; L-histidine from 5-phospho-alpha-D-ribose 1-diphosphate: step 2/9. The protein is Phosphoribosyl-ATP pyrophosphatase of Methanococcus vannielii (strain ATCC 35089 / DSM 1224 / JCM 13029 / OCM 148 / SB).